We begin with the raw amino-acid sequence, 109 residues long: Movement protein TGB2 (109 aa).

At 1 to 9 (MPLTPPPDF) the chain is on the cytoplasmic side. Residues 10-30 (TKVYLSAALGVSLALVVWLLI) traverse the membrane as a helical segment. The Lumenal portion of the chain corresponds to 31-72 (RSTLPVVGDRDHNLPHGGWYRDGTKSVFYNSPGRLNSIEARK). A helical membrane pass occupies residues 73-93 (APLLGQPWAIVVLLVLLIWAS). At 94 to 109 (HKLGRPNCRACAGSHT) the chain is on the cytoplasmic side.

It belongs to the Tymovirales TGBp2 protein family.

Its subcellular location is the host endoplasmic reticulum membrane. In terms of biological role, plays a role in viral cell-to-cell propagation, by facilitating genome transport to neighboring plant cells through plasmosdesmata,. The protein is Movement protein TGB2 of Solanum tuberosum (Potato).